A 550-amino-acid polypeptide reads, in one-letter code: Chaperonin GroEL (550 aa).

Residues 30 to 33 (TLGP), Lys51, 87 to 91 (DGTTT), Gly415, 479 to 481 (NAA), and Asp495 each bind ATP.

The protein belongs to the chaperonin (HSP60) family. Forms a cylinder of 14 subunits composed of two heptameric rings stacked back-to-back. Interacts with the co-chaperonin GroES.

It localises to the cytoplasm. It carries out the reaction ATP + H2O + a folded polypeptide = ADP + phosphate + an unfolded polypeptide.. Its function is as follows. Together with its co-chaperonin GroES, plays an essential role in assisting protein folding. The GroEL-GroES system forms a nano-cage that allows encapsulation of the non-native substrate proteins and provides a physical environment optimized to promote and accelerate protein folding. The sequence is that of Chaperonin GroEL from Burkholderia mallei (strain NCTC 10247).